A 258-amino-acid polypeptide reads, in one-letter code: Probable N-acetylglucosaminyl-phosphatidylinositol de-N-acetylase (258 aa).

The interval Lys147–Thr170 is disordered. Low complexity predominate over residues Ser148–Thr170.

Belongs to the PIGL family.

It is found in the endoplasmic reticulum membrane. It catalyses the reaction a 6-(N-acetyl-alpha-D-glucosaminyl)-1-(1,2-diacyl-sn-glycero-3-phospho)-1D-myo-inositol + H2O = a 6-(alpha-D-glucosaminyl)-1-(1,2-diacyl-sn-glycero-3-phospho)-1D-myo-inositol + acetate. The protein operates within glycolipid biosynthesis; glycosylphosphatidylinositol-anchor biosynthesis. Its function is as follows. Involved in the second step of GPI biosynthesis. De-N-acetylation of N-acetylglucosaminyl-phosphatidylinositol. This Dictyostelium discoideum (Social amoeba) protein is Probable N-acetylglucosaminyl-phosphatidylinositol de-N-acetylase (pigl).